Consider the following 492-residue polypeptide: Uridine-cytidine kinase D (492 aa).

The tract at residues 36–56 (PLPKNKKDHDQSIESDSSFTR) is disordered. Residue 117 to 124 (GPVGAGKT) coordinates ATP. In terms of domain architecture, CYTH spans 290–460 (EPVYVCKAKY…PQTFLYLYFK (171 aa)). A compositionally biased stretch (low complexity) spans 468 to 483 (PNYSKLKPNNTNSKIL). Positions 468-492 (PNYSKLKPNNTNSKILKNNKDKKNL) are disordered.

The protein belongs to the uridine kinase family.

The enzyme catalyses uridine + ATP = UMP + ADP + H(+). The catalysed reaction is cytidine + ATP = CMP + ADP + H(+). Its pathway is pyrimidine metabolism; CTP biosynthesis via salvage pathway; CTP from cytidine: step 1/3. The protein operates within pyrimidine metabolism; UMP biosynthesis via salvage pathway; UMP from uridine: step 1/1. In terms of biological role, catalyzes the conversion of uridine into uridine monophosphate and cytidine into cytidine monophosphate in the pyrimidine salvage pathway. The polypeptide is Uridine-cytidine kinase D (udkD) (Dictyostelium discoideum (Social amoeba)).